The following is a 180-amino-acid chain: Adenine phosphoribosyltransferase (180 aa).

An N-acetylalanine modification is found at Ala2. Ser4, Ser15, and Ser30 each carry phosphoserine. At Tyr60 the chain carries Phosphotyrosine. A Phosphoserine modification is found at Ser66. Position 114 is an N6-acetyllysine (Lys114). Thr135 is subject to Phosphothreonine.

The protein belongs to the purine/pyrimidine phosphoribosyltransferase family. In terms of assembly, homodimer.

It is found in the cytoplasm. It catalyses the reaction AMP + diphosphate = 5-phospho-alpha-D-ribose 1-diphosphate + adenine. It functions in the pathway purine metabolism; AMP biosynthesis via salvage pathway; AMP from adenine: step 1/1. Its function is as follows. Catalyzes a salvage reaction resulting in the formation of AMP, that is energically less costly than de novo synthesis. This chain is Adenine phosphoribosyltransferase, found in Homo sapiens (Human).